The primary structure comprises 443 residues: Mitochondrial enolase superfamily member 1 (443 aa).

Substrate contacts are provided by residues 24–26 and tyrosine 34; that span reads GSD. Serine 148 carries the phosphoserine modification. Lysine 220 provides a ligand contact to substrate. The active-site Proton donor/acceptor is the lysine 222. Residue aspartate 250 participates in Mg(2+) binding. Residues asparagine 252, glutamate 276, glutamate 305, 355–357, and glutamate 386 contribute to the substrate site; that span reads HAG. Residues glutamate 276 and glutamate 305 each coordinate Mg(2+). Histidine 355 is a catalytic residue.

This sequence belongs to the mandelate racemase/muconate lactonizing enzyme family. ENOSF1 subfamily. Requires Mg(2+) as cofactor. Post-translationally, could be sumoylated.

Its subcellular location is the mitochondrion. The catalysed reaction is L-fuconate = 2-dehydro-3-deoxy-L-fuconate + H2O. Plays a role in the catabolism of L-fucose, a sugar that is part of the carbohydrates that are attached to cellular glycoproteins. Catalyzes the dehydration of L-fuconate to 2-keto-3-deoxy-L-fuconate by the abstraction of the 2-proton to generate an enediolate intermediate that is stabilized by the magnesium ion. May down-regulate thymidylate synthase activity, possibly already at the RNA level, by promoting the degradation of TYMS mRNA via an antisense RNA-based mechanism. This is Mitochondrial enolase superfamily member 1 (ENOSF1) from Bos taurus (Bovine).